The chain runs to 378 residues: Erythronate-4-phosphate dehydrogenase (378 aa).

S45 and T66 together coordinate substrate. D146 and T175 together coordinate NAD(+). The active site involves R208. D232 is a binding site for NAD(+). Residue E237 is part of the active site. The Proton donor role is filled by H254. G257 contributes to the NAD(+) binding site. Y258 contacts substrate.

Belongs to the D-isomer specific 2-hydroxyacid dehydrogenase family. PdxB subfamily. Homodimer.

Its subcellular location is the cytoplasm. It catalyses the reaction 4-phospho-D-erythronate + NAD(+) = (R)-3-hydroxy-2-oxo-4-phosphooxybutanoate + NADH + H(+). It functions in the pathway cofactor biosynthesis; pyridoxine 5'-phosphate biosynthesis; pyridoxine 5'-phosphate from D-erythrose 4-phosphate: step 2/5. Catalyzes the oxidation of erythronate-4-phosphate to 3-hydroxy-2-oxo-4-phosphonooxybutanoate. This is Erythronate-4-phosphate dehydrogenase from Enterobacter sp. (strain 638).